We begin with the raw amino-acid sequence, 378 residues long: Peptide methionine sulfoxide reductase MsrA/MsrB (378 aa).

The segment at 40–197 is peptide methionine sulfoxide reductase A; that stretch reads QQATLAGGCF…KVRYNYYRYA (158 aa). Cys-48 is a catalytic residue. A MsrB domain is found at 240 to 362; sequence DEQIRAKLTS…NSAAMRFIPK (123 aa). Cys-351 (nucleophile) is an active-site residue.

It in the N-terminal section; belongs to the MsrA Met sulfoxide reductase family. The protein in the C-terminal section; belongs to the MsrB Met sulfoxide reductase family.

It catalyses the reaction L-methionyl-[protein] + [thioredoxin]-disulfide + H2O = L-methionyl-(S)-S-oxide-[protein] + [thioredoxin]-dithiol. The catalysed reaction is [thioredoxin]-disulfide + L-methionine + H2O = L-methionine (S)-S-oxide + [thioredoxin]-dithiol. The enzyme catalyses L-methionyl-[protein] + [thioredoxin]-disulfide + H2O = L-methionyl-(R)-S-oxide-[protein] + [thioredoxin]-dithiol. In terms of biological role, has an important function as a repair enzyme for proteins that have been inactivated by oxidation. Catalyzes the reversible oxidation-reduction of methionine sulfoxide in proteins to methionine. This Vibrio cholerae serotype O1 (strain ATCC 39315 / El Tor Inaba N16961) protein is Peptide methionine sulfoxide reductase MsrA/MsrB (msrAB).